Reading from the N-terminus, the 579-residue chain is MSEIPATDATAPAEKKDFIRQIVREDLASGKHTAIRTRFPPEPNGYLHIGHAKAICLDFGLAAEFGGLCNLRLDDTNPAKEDPEFVVAIQDDVRWLGFEWAQLRHASDYFEVYYLAAEKLIRDGHAFVCDLSAEQVRQYRGTLTEPGRNSPFRERSVDENLDLFRRMRAGEFPDGARTLRAKIDMASGNINLRDPALYRIKHVEHQNTGNAWPIYPMYDFAHSLGDAVEGITHSLCTLEFEDHRPLYDWCVDKVDLSGHPELLAPLLGKGYPKEAAKPRQIEFSRLNINYTVMSKRKLTALVEEQLVDGWDDPRMYTLQGLRRRGYTPAAMRLFVDRVGISKQNSVIDFSVLEGCLREDLDAAAARRMAVIDPLKLVLTNLPEGHTETLQFSNHPKDESFGTREVPFARELWIEREDFAEVPPKGWKRLVPGGEIRLRGAGIARVDEVIKDAAGEIVELRGWLDPESRPGMIGSNRKVKGTIHWVSAVHAVEAEIRLYDRLFSVEKPDDESEGKTYRDYLNPESKRSVRGYVEPSAAQAAPEQAFQFERTGYFVADRRDHSAATPAFNRSVTLRDTWAK.

The 'HIGH' region signature appears at 41–51; it reads PEPNGYLHIGH. Residues 42–44 and 48–54 contribute to the ATP site; these read EPN and HIGHAKA. 2 residues coordinate L-glutamine: Asp-74 and Tyr-218. Residues Thr-237, 285-286, and 293-295 contribute to the ATP site; these read RL and MSK. Residues 292–296 carry the 'KMSKS' region motif; the sequence is VMSKR.

Belongs to the class-I aminoacyl-tRNA synthetase family. Monomer.

The protein resides in the cytoplasm. It carries out the reaction tRNA(Gln) + L-glutamine + ATP = L-glutaminyl-tRNA(Gln) + AMP + diphosphate. The sequence is that of Glutamine--tRNA ligase from Xanthomonas campestris pv. campestris (strain 8004).